A 122-amino-acid polypeptide reads, in one-letter code: Large ribosomal subunit protein bL19c (122 aa).

It belongs to the bacterial ribosomal protein bL19 family.

The protein resides in the plastid. Its subcellular location is the chloroplast. This chain is Large ribosomal subunit protein bL19c, found in Gracilaria tenuistipitata var. liui (Red alga).